The sequence spans 252 residues: Agamous-like MADS-box protein AGL6 (252 aa).

One can recognise an MADS-box domain in the interval 3 to 57 (RGRVEMKRIENKINRQVTFSKRRNGLLKKAYELSVLCDAEVALIIFSSRGKLYEF). In terms of domain architecture, K-box spans 86–176 (TQSWCQEVTK…KIKFETEGHA (91 aa)). A coiled-coil region spans residues 91–173 (QEVTKLKSKY…KQLKIKFETE (83 aa)).

In terms of assembly, forms a heterodimer with AGAMOUS. Interacts with AGL15 and AGL16. Preferentially expressed in flowers.

It is found in the nucleus. In terms of biological role, probable transcription factor. Forms a heterodimer via the K-box domain with AG, that could be involved in genes regulation during floral meristem development. The sequence is that of Agamous-like MADS-box protein AGL6 (AGL6) from Arabidopsis thaliana (Mouse-ear cress).